Consider the following 232-residue polypeptide: Orotidine 5'-phosphate decarboxylase (232 aa).

Residues Asp-11, Lys-33, 61-70 (DMKLFDIGAT), Thr-116, Arg-179, Gln-188, Gly-208, and Arg-209 contribute to the substrate site. The Proton donor role is filled by Lys-63.

The protein belongs to the OMP decarboxylase family. Type 1 subfamily. Homodimer.

It catalyses the reaction orotidine 5'-phosphate + H(+) = UMP + CO2. Its pathway is pyrimidine metabolism; UMP biosynthesis via de novo pathway; UMP from orotate: step 2/2. Catalyzes the decarboxylation of orotidine 5'-monophosphate (OMP) to uridine 5'-monophosphate (UMP). This is Orotidine 5'-phosphate decarboxylase from Cereibacter sphaeroides (strain ATCC 17023 / DSM 158 / JCM 6121 / CCUG 31486 / LMG 2827 / NBRC 12203 / NCIMB 8253 / ATH 2.4.1.) (Rhodobacter sphaeroides).